Here is a 239-residue protein sequence, read N- to C-terminus: Ribosomal RNA small subunit methyltransferase G (239 aa).

S-adenosyl-L-methionine contacts are provided by residues Gly77, Phe82, 128–129 (AE), and Arg146. Positions 215-239 (DKKRQTPKKYPRKPGTPNKTPLLEK) are disordered.

The protein belongs to the methyltransferase superfamily. RNA methyltransferase RsmG family.

The protein resides in the cytoplasm. Functionally, specifically methylates the N7 position of guanine in position 535 of 16S rRNA. This chain is Ribosomal RNA small subunit methyltransferase G, found in Staphylococcus aureus (strain bovine RF122 / ET3-1).